The primary structure comprises 313 residues: Ribosomal protein L11 methyltransferase (313 aa).

The S-adenosyl-L-methionine site is built by T164, G185, D207, and N249.

Belongs to the methyltransferase superfamily. PrmA family.

The protein localises to the cytoplasm. The catalysed reaction is L-lysyl-[protein] + 3 S-adenosyl-L-methionine = N(6),N(6),N(6)-trimethyl-L-lysyl-[protein] + 3 S-adenosyl-L-homocysteine + 3 H(+). Methylates ribosomal protein L11. In Clostridium perfringens (strain ATCC 13124 / DSM 756 / JCM 1290 / NCIMB 6125 / NCTC 8237 / Type A), this protein is Ribosomal protein L11 methyltransferase.